The primary structure comprises 576 residues: Calmodulin-binding protein 60 B (576 aa).

Residues 1–25 (MMLPTKRPAPDHGDDERNEVMVPEP) are disordered. The segment at 1 to 80 (MMLPTKRPAP…HPSSRPSLNR (80 aa)) is calmodulin-binding. The span at 8–25 (PAPDHGDDERNEVMVPEP) shows a compositional bias: basic and acidic residues. Positions 150-273 (DERQDWTENE…AFHKRLAYKN (124 aa)) are DNA-binding.

It belongs to the plant ACBP60 protein family. (Microbial infection) Interacts with V.dahliae SCP41. As to quaternary structure, interacts with calmodulin (CaM).

It localises to the nucleus. Transcription activator that binds DNA in a sequence-specific manner, likely 5'-GAAATTTTGG-3', to promote the expression of target genes. Required for pathogen resistance. This Gossypium hirsutum (Upland cotton) protein is Calmodulin-binding protein 60 B.